The sequence spans 252 residues: Biosynthetic peptidoglycan transglycosylase (252 aa).

The helical transmembrane segment at 23-43 (IGFLLGCIVAGVVAMQVYFFL) threads the bilayer.

This sequence belongs to the glycosyltransferase 51 family.

The protein resides in the cell inner membrane. It catalyses the reaction [GlcNAc-(1-&gt;4)-Mur2Ac(oyl-L-Ala-gamma-D-Glu-L-Lys-D-Ala-D-Ala)](n)-di-trans,octa-cis-undecaprenyl diphosphate + beta-D-GlcNAc-(1-&gt;4)-Mur2Ac(oyl-L-Ala-gamma-D-Glu-L-Lys-D-Ala-D-Ala)-di-trans,octa-cis-undecaprenyl diphosphate = [GlcNAc-(1-&gt;4)-Mur2Ac(oyl-L-Ala-gamma-D-Glu-L-Lys-D-Ala-D-Ala)](n+1)-di-trans,octa-cis-undecaprenyl diphosphate + di-trans,octa-cis-undecaprenyl diphosphate + H(+). Its pathway is cell wall biogenesis; peptidoglycan biosynthesis. Its function is as follows. Peptidoglycan polymerase that catalyzes glycan chain elongation from lipid-linked precursors. The protein is Biosynthetic peptidoglycan transglycosylase of Cupriavidus pinatubonensis (strain JMP 134 / LMG 1197) (Cupriavidus necator (strain JMP 134)).